Consider the following 134-residue polypeptide: Large ribosomal subunit protein eL32 (134 aa).

It belongs to the eukaryotic ribosomal protein eL32 family.

This Drosophila affinis (Fruit fly) protein is Large ribosomal subunit protein eL32 (RpL32).